The primary structure comprises 399 residues: Putative gustatory receptor 59e (399 aa).

The Cytoplasmic segment spans residues 1 to 33; it reads MDSSYWENLLLTINRFLGVYPSGRVGVLRWLHT. A helical membrane pass occupies residues 34-54; that stretch reads LWSLFLLMYIWTGSIVKCLEF. The Extracellular segment spans residues 55–65; the sequence is TVEIPTIEKLL. The chain crosses the membrane as a helical span at residues 66–86; it reads YLMEFPGNMATIAILVYYAVL. Topologically, residues 87–120 are cytoplasmic; it reads NRPLAHGAELQIERIITGLKGKAKRLVYKRHGQR. Residues 121–141 traverse the membrane as a helical segment; the sequence is TLHLMATTLVFHGLCVLVDVV. At 142–206 the chain is on the extracellular side; it reads NYDFEFWTTW…RPPQGSTKLD (65 aa). The helical transmembrane segment at 207-227 threads the bilayer; that stretch reads ACYESAFAVLVDAGGGSALMI. Residues 228-250 are Cytoplasmic-facing; sequence EEMRYTCNLIEQVHSQFLLRFGL. The helical transmembrane segment at 251–271 threads the bilayer; sequence YLVLNLLNSLVSICVELYLIF. The Extracellular portion of the chain corresponds to 272 to 282; that stretch reads NFFETPLWEES. The chain crosses the membrane as a helical span at residues 283–303; that stretch reads VLLVYRLLWLAMHGGRIWFIL. The Cytoplasmic segment spans residues 304–361; the sequence is SVNEQILEQKCNLCQLLNELEVCSSRLQRTINRFLLQLQRSIDQPLEACGIVTLDTRS. Residues 362 to 382 traverse the membrane as a helical segment; the sequence is LGGFIGVLMAIVIFLIQIGLG. N383 and N392 each carry an N-linked (GlcNAc...) asparagine glycan. Topologically, residues 383-399 are extracellular; sequence NKSLMGVALNRSNWVYV.

The protein belongs to the insect chemoreceptor superfamily. Gustatory receptor (GR) family. Gr10a subfamily. In terms of tissue distribution, expressed in the adult labellar chemosensory neurons. In larvae, is expressed in neurons of the terminal external chemosensory organ.

The protein localises to the cell membrane. In terms of biological role, probable gustatory receptor which mediates acceptance or avoidance behavior, depending on its substrates. In Drosophila melanogaster (Fruit fly), this protein is Putative gustatory receptor 59e (Gr59e).